Consider the following 1669-residue polypeptide: Collagen alpha-1(IV) chain (1669 aa).

Positions 1 to 27 (MGPRLGVWLLLLLAALLLHEESSRAAA) are cleaved as a signal peptide. Positions 28–172 (KGGCAGSGCG…LGHIPGTLLK (145 aa)) are cleaved as a propeptide — N-terminal propeptide (7S domain). Residues 50-1445 (ERGLPGLQGV…PPGTPSVDHG (1396 aa)) are disordered. A triple-helical region region spans residues 173 to 1440 (GERGYPGQPG…PGSMGPPGTP (1268 aa)). Over residues 196–214 (VGPPGFTGPPGPPGPPGPP) the composition is skewed to pro residues. 3 positions are modified to 3-hydroxyproline: Pro-204, Pro-207, and Pro-210. Composition is skewed to basic and acidic residues over residues 254 to 263 (TAMRGEKGQK) and 289 to 298 (PGKDGEKGEK). Gly residues predominate over residues 347 to 356 (GYPGGPGAKG). Low complexity predominate over residues 357–366 (ETGPKGFPGI). The segment covering 367-376 (PGQPGPPGFP) has biased composition (pro residues). Residues 396–412 (PGLPGVSLPGPSGRDGL) are compositionally biased toward low complexity. 2 stretches are compositionally biased toward pro residues: residues 413–424 (PGPPGPPGPPGQ) and 436–448 (PGPPGDQGPPGIP). The span at 485–494 (PGEIGFPGQP) shows a compositional bias: low complexity. Basic and acidic residues-rich tracts occupy residues 497–508 (KGDRGLPGRDGL) and 535–545 (FDIRLKGDKGD). Over residues 586-595 (GPPGGVGFPG) the composition is skewed to gly residues. Pro-587 and Pro-602 each carry 3-hydroxyproline. Pro-603 is modified (4-hydroxyproline). Pro-605 carries the post-translational modification 3-hydroxyproline. 4-hydroxyproline occurs at positions 606, 623, 626, 629, and 632. Pro-647 is subject to 3-hydroxyproline. Gly residues-rich tracts occupy residues 758–767 (GNVGGPGIPG) and 797–817 (GVPGIGPPGAMGPPGGQGPPG). Over residues 847–871 (SQGLPGLTGQSGLPGLPGQQGTPGQ) the composition is skewed to low complexity. The segment covering 937–955 (SMDKVDMGSMKGEKGDQGE) has biased composition (basic and acidic residues). The span at 1011–1020 (GSAGGMGLPG) shows a compositional bias: gly residues. Low complexity-rich tracts occupy residues 1030–1040 (IPGPQGIPGLP), 1101–1114 (SPGSVGYPGSPGLP), and 1193–1212 (FPGLSGSPGIPGSKGEQGFM). Pro-1214 is subject to 3-hydroxyproline. Positions 1247-1258 (PGRPGPMGPPGL) are enriched in pro residues. Over residues 1290–1299 (GMPGIGGSPG) the composition is skewed to gly residues. A compositionally biased stretch (pro residues) spans 1413 to 1428 (FGPPGPRGFPGPPGPD). Pro-1424 carries the post-translational modification 3-hydroxyproline. The region spanning 1445–1669 (GFLVTRHSQT…SRCQVCMRRT (225 aa)) is the Collagen IV NC1 domain. Intrachain disulfides connect Cys-1460–Cys-1551, Cys-1493–Cys-1548, Cys-1505–Cys-1511, Cys-1570–Cys-1665, Cys-1604–Cys-1662, and Cys-1616–Cys-1622. Met-1533 is covalently cross-linked (S-Lysyl-methionine sulfilimine (Met-Lys) (interchain with K-1651)). Lys-1651 is covalently cross-linked (S-Lysyl-methionine sulfilimine (Lys-Met) (interchain with M-1533)).

Belongs to the type IV collagen family. As to quaternary structure, there are six type IV collagen isoforms, alpha 1(IV)-alpha 6(IV), each of which can form a triple helix structure with 2 other chains to generate type IV collagen network. Interacts with EFEMP2. In terms of processing, lysines at the third position of the tripeptide repeating unit (G-X-Y) are hydroxylated in all cases. The modified lysines can be O-glycosylated. Post-translationally, contains 4-hydroxyproline. Prolines at the third position of the tripeptide repeating unit (G-X-Y) are hydroxylated in some or all of the chains. Contains 3-hydroxyproline. This modification occurs on the first proline residue in the sequence motif Gly-Pro-Hyp, where Hyp is 4-hydroxyproline. In terms of processing, type IV collagens contain numerous cysteine residues which are involved in inter- and intramolecular disulfide bonding. 12 of these, located in the NC1 domain, are conserved in all known type IV collagens. Post-translationally, the trimeric structure of the NC1 domains is stabilized by covalent bonds (sulfilimine cross-links) between Lys and Met residues. These cross-links are important for the mechanical stability of the basement membrane. Sulfilimine cross-link is catalyzed by PXDN. Proteolytic processing produces the C-terminal NC1 peptide, arresten.

It is found in the secreted. It localises to the extracellular space. Its subcellular location is the extracellular matrix. The protein resides in the basement membrane. Its function is as follows. Type IV collagen is the major structural component of glomerular basement membranes (GBM), forming a 'chicken-wire' meshwork together with laminins, proteoglycans and entactin/nidogen. In terms of biological role, arresten, comprising the C-terminal NC1 domain, inhibits angiogenesis and tumor formation. The C-terminal half is found to possess the anti-angiogenic activity. Specifically inhibits endothelial cell proliferation, migration and tube formation. The protein is Collagen alpha-1(IV) chain of Bos taurus (Bovine).